The sequence spans 510 residues: Bifunctional pantoate ligase/cytidylate kinase (510 aa).

The interval 1–276 is pantoate--beta-alanine ligase; it reads MKKVIIRKTE…CGETRLIDHV (276 aa). Position 29–36 (29–36) interacts with ATP; the sequence is MGNLHDGH. Histidine 36 acts as the Proton donor in catalysis. Glutamine 61 is a (R)-pantoate binding site. Residue glutamine 61 participates in beta-alanine binding. Residue 150–153 participates in ATP binding; it reads GEKD. Residue glutamine 156 participates in (R)-pantoate binding. 187–190 is an ATP binding site; it reads LSSR. The tract at residues 277–510 is cytidylate kinase; the sequence is FLMKRRPIIA…DRIPKETEIK (234 aa).

In the N-terminal section; belongs to the pantothenate synthetase family. This sequence in the C-terminal section; belongs to the cytidylate kinase family. Type 1 subfamily.

It localises to the cytoplasm. The enzyme catalyses (R)-pantoate + beta-alanine + ATP = (R)-pantothenate + AMP + diphosphate + H(+). It catalyses the reaction CMP + ATP = CDP + ADP. It carries out the reaction dCMP + ATP = dCDP + ADP. It participates in cofactor biosynthesis; (R)-pantothenate biosynthesis; (R)-pantothenate from (R)-pantoate and beta-alanine: step 1/1. In terms of biological role, catalyzes the condensation of pantoate with beta-alanine in an ATP-dependent reaction via a pantoyl-adenylate intermediate. Catalyzes the transfer of a phosphate group from ATP to either CMP or dCMP to form CDP or dCDP and ADP, respectively. This Prochlorococcus marinus (strain MIT 9301) protein is Bifunctional pantoate ligase/cytidylate kinase.